Consider the following 281-residue polypeptide: Putative E3 ubiquitin-protein ligase SINA-like 6 (281 aa).

A disordered region spans residues 1–26; the sequence is MVGVLLSERNGSQKRHCSSISSDDGR. The RING-type zinc finger occupies 45 to 81; sequence CPICYQALKIPVFQCGNGHLACSSCCPKLRNKCPACA. The SBD stretch occupies residues 95 to 280; it reads VLESVLVPCR…MMLCINELKQ (186 aa). An SIAH-type zinc finger spans residues 98–156; sequence SVLVPCRYADLGCTKTIYYGRESTHEKICNFSPCSCPVQGCNYTGSYKDLYEHYDLTHS. Residues Cys-103, Cys-110, His-122, Cys-126, Cys-133, Cys-138, His-150, and His-155 each contribute to the Zn(2+) site.

The protein belongs to the SINA (Seven in absentia) family.

The catalysed reaction is S-ubiquitinyl-[E2 ubiquitin-conjugating enzyme]-L-cysteine + [acceptor protein]-L-lysine = [E2 ubiquitin-conjugating enzyme]-L-cysteine + N(6)-ubiquitinyl-[acceptor protein]-L-lysine.. The protein operates within protein modification; protein ubiquitination. Its function is as follows. E3 ubiquitin-protein ligase that mediates ubiquitination and subsequent proteasomal degradation of target proteins. E3 ubiquitin ligases accept ubiquitin from an E2 ubiquitin-conjugating enzyme in the form of a thioester and then directly transfers the ubiquitin to targeted substrates. It probably triggers the ubiquitin-mediated degradation of different substrates. The polypeptide is Putative E3 ubiquitin-protein ligase SINA-like 6 (Arabidopsis thaliana (Mouse-ear cress)).